We begin with the raw amino-acid sequence, 294 residues long: tRNA dimethylallyltransferase (294 aa).

An ATP-binding site is contributed by 10-17 (GPTAVGKT). 12–17 (TAVGKT) provides a ligand contact to substrate. The interval 35-38 (DSQQ) is interaction with substrate tRNA.

This sequence belongs to the IPP transferase family. In terms of assembly, monomer. Mg(2+) is required as a cofactor.

It carries out the reaction adenosine(37) in tRNA + dimethylallyl diphosphate = N(6)-dimethylallyladenosine(37) in tRNA + diphosphate. Functionally, catalyzes the transfer of a dimethylallyl group onto the adenine at position 37 in tRNAs that read codons beginning with uridine, leading to the formation of N6-(dimethylallyl)adenosine (i(6)A). This is tRNA dimethylallyltransferase from Streptococcus pneumoniae (strain Taiwan19F-14).